A 191-amino-acid polypeptide reads, in one-letter code: Neurotrophic factor BDNF precursor form (191 aa).

The disordered stretch occupies residues 1 to 23 (GQGSLAYPGLRTQGNLETLGGPN). A propeptide spanning residues 1–100 (GQGSLAYPGL…AANMSMRVRR (100 aa)) is cleaved from the precursor. A glycan (N-linked (GlcNAc...) asparagine) is linked at Asn93. Cys113 and Cys180 are oxidised to a cystine.

This sequence belongs to the NGF-beta family.

Its subcellular location is the secreted. Its function is as follows. Promotes the survival of neuronal populations that are all located either in the central nervous system or directly connected to it. In Anilius scytale (Coral cylinder snake), this protein is Neurotrophic factor BDNF precursor form (BDNF).